The primary structure comprises 776 residues: Endonuclease MutS2 (776 aa).

Residue 330–337 (GPNTGGKT) participates in ATP binding. One can recognise a Smr domain in the interval 701–776 (LDLRGMRYEE…GSGATIAILK (76 aa)).

The protein belongs to the DNA mismatch repair MutS family. MutS2 subfamily. As to quaternary structure, homodimer. Binds to stalled ribosomes, contacting rRNA.

Its function is as follows. Endonuclease that is involved in the suppression of homologous recombination and thus may have a key role in the control of bacterial genetic diversity. Acts as a ribosome collision sensor, splitting the ribosome into its 2 subunits. Detects stalled/collided 70S ribosomes which it binds and splits by an ATP-hydrolysis driven conformational change. Acts upstream of the ribosome quality control system (RQC), a ribosome-associated complex that mediates the extraction of incompletely synthesized nascent chains from stalled ribosomes and their subsequent degradation. Probably generates substrates for RQC. This Lactococcus lactis subsp. cremoris (strain SK11) protein is Endonuclease MutS2.